The chain runs to 363 residues: Branched-chain-amino-acid aminotransferase 2 (363 aa).

Lysine 197 carries the post-translational modification N6-(pyridoxal phosphate)lysine.

It belongs to the class-IV pyridoxal-phosphate-dependent aminotransferase family. The cofactor is pyridoxal 5'-phosphate.

The enzyme catalyses L-leucine + 2-oxoglutarate = 4-methyl-2-oxopentanoate + L-glutamate. It catalyses the reaction L-isoleucine + 2-oxoglutarate = (S)-3-methyl-2-oxopentanoate + L-glutamate. The catalysed reaction is L-valine + 2-oxoglutarate = 3-methyl-2-oxobutanoate + L-glutamate. Its pathway is amino-acid biosynthesis; L-isoleucine biosynthesis; L-isoleucine from 2-oxobutanoate: step 4/4. The protein operates within amino-acid biosynthesis; L-leucine biosynthesis; L-leucine from 3-methyl-2-oxobutanoate: step 4/4. It participates in amino-acid biosynthesis; L-valine biosynthesis; L-valine from pyruvate: step 4/4. With respect to regulation, inhibited by canaline. Its function is as follows. Transaminates branched-chain amino acids and ketoglutarate. In Bacillus subtilis (strain 168), this protein is Branched-chain-amino-acid aminotransferase 2 (ilvK).